The following is a 598-amino-acid chain: Elongation factor 4 (598 aa).

The 183-residue stretch at Ile4–Ser186 folds into the tr-type G domain. Residues Asp16–Thr21 and Asn133–Asp136 contribute to the GTP site.

This sequence belongs to the TRAFAC class translation factor GTPase superfamily. Classic translation factor GTPase family. LepA subfamily.

The protein resides in the cell inner membrane. The catalysed reaction is GTP + H2O = GDP + phosphate + H(+). Required for accurate and efficient protein synthesis under certain stress conditions. May act as a fidelity factor of the translation reaction, by catalyzing a one-codon backward translocation of tRNAs on improperly translocated ribosomes. Back-translocation proceeds from a post-translocation (POST) complex to a pre-translocation (PRE) complex, thus giving elongation factor G a second chance to translocate the tRNAs correctly. Binds to ribosomes in a GTP-dependent manner. This chain is Elongation factor 4, found in Ehrlichia ruminantium (strain Welgevonden).